A 562-amino-acid polypeptide reads, in one-letter code: Glutamine--tRNA ligase (562 aa).

The 'HIGH' region motif lies at 35–45 (PEPNGYLHIGH). ATP contacts are provided by residues 36 to 38 (EPN) and 42 to 48 (HIGHAKS). Positions 68 and 213 each coordinate L-glutamine. ATP is bound by residues threonine 232 and 264 to 265 (RL). The 'KMSKS' region signature appears at 271–275 (ITSKR).

This sequence belongs to the class-I aminoacyl-tRNA synthetase family. Monomer.

Its subcellular location is the cytoplasm. It catalyses the reaction tRNA(Gln) + L-glutamine + ATP = L-glutaminyl-tRNA(Gln) + AMP + diphosphate. The sequence is that of Glutamine--tRNA ligase from Neisseria gonorrhoeae (strain ATCC 700825 / FA 1090).